Consider the following 382-residue polypeptide: Queuine tRNA-ribosyltransferase (382 aa).

Residue Asp94 is the Proton acceptor of the active site. Substrate contacts are provided by residues 94–98 (DSGGF), Asp148, Gln192, and Gly219. Residues 250-256 (GVGKPED) are RNA binding. Asp269 serves as the catalytic Nucleophile. An RNA binding; important for wobble base 34 recognition region spans residues 274–278 (TRNAR). Zn(2+) is bound by residues Cys307, Cys309, Cys312, and His338.

Belongs to the queuine tRNA-ribosyltransferase family. Homodimer. Within each dimer, one monomer is responsible for RNA recognition and catalysis, while the other monomer binds to the replacement base PreQ1. The cofactor is Zn(2+).

It carries out the reaction 7-aminomethyl-7-carbaguanine + guanosine(34) in tRNA = 7-aminomethyl-7-carbaguanosine(34) in tRNA + guanine. Its pathway is tRNA modification; tRNA-queuosine biosynthesis. In terms of biological role, catalyzes the base-exchange of a guanine (G) residue with the queuine precursor 7-aminomethyl-7-deazaguanine (PreQ1) at position 34 (anticodon wobble position) in tRNAs with GU(N) anticodons (tRNA-Asp, -Asn, -His and -Tyr). Catalysis occurs through a double-displacement mechanism. The nucleophile active site attacks the C1' of nucleotide 34 to detach the guanine base from the RNA, forming a covalent enzyme-RNA intermediate. The proton acceptor active site deprotonates the incoming PreQ1, allowing a nucleophilic attack on the C1' of the ribose to form the product. After dissociation, two additional enzymatic reactions on the tRNA convert PreQ1 to queuine (Q), resulting in the hypermodified nucleoside queuosine (7-(((4,5-cis-dihydroxy-2-cyclopenten-1-yl)amino)methyl)-7-deazaguanosine). This Haemophilus ducreyi (strain 35000HP / ATCC 700724) protein is Queuine tRNA-ribosyltransferase.